A 618-amino-acid chain; its full sequence is Chaperone protein HtpG (618 aa).

Residues 1–331 form an a; substrate-binding region; sequence MAKHTFQTEV…SEDLPLNVSR (331 aa). The interval 332–541 is b; the sequence is EILQQNRILA…EDDPNFAMIK (210 aa). Residues 542-618 form a c region; it reads MMRQMGNALG…RLNAMLERAI (77 aa).

The protein belongs to the heat shock protein 90 family. Homodimer.

It is found in the cytoplasm. Its function is as follows. Molecular chaperone. Has ATPase activity. This chain is Chaperone protein HtpG, found in Wolinella succinogenes (strain ATCC 29543 / DSM 1740 / CCUG 13145 / JCM 31913 / LMG 7466 / NCTC 11488 / FDC 602W) (Vibrio succinogenes).